The sequence spans 243 residues: MNRLQAKKAVNVSRHEQKRIRYKLTPEEVKAERKERKRRAAIQRAEKKLIRAKGEALVAFQAVSNPSCNFLVIDFEAYEFNQKIITEAGITMRINGEWDYHHYRIKNFLHLRNGRFVPDEADNFQFGDSKIVTKIAFISILKKILKTPNLHLVGHGVENEIKYANVLGIPIPKDVTVLDTQNVFSFFQSLFLKEISNSNNISLAKMLTHLNIRAFCLHNAGNDARYTSEALREMTNKFTLSNF.

It is found in the nucleus. Its subcellular location is the nucleolus. This is an uncharacterized protein from Schizosaccharomyces pombe (strain 972 / ATCC 24843) (Fission yeast).